The sequence spans 687 residues: MKDAKADTKEKLNQPATGTPAATGPVKGGLNGKVPTSPAKQKAYNGDVRKDKVLVLLVEYADFKHNNIDKEPGYMYSEDFNKEHYEKMLYGDEPFALEDGSKIETFKQYYEEQSGGSYTVDGTVTKWLTVPGKAADYGADAATGHDNKGPKGPRDLVKDALKAAVDSGLDLSQFDQFDQYDVNGDGNQNQPDGLIDHLMIIHAGVGQEAGGGKLGDDAIWSHRWTVGPKPFAIEGTQAKVPYWGGKMAAFDYTIEPEDGAVGVNAHEYGHDLGLPDEYDTDYTGHGEPIQAWSVMSGGTWAGKIAGTTPTSFSPQNKEFFQKTIGGNWANIVEVDYEKLNKGIGLATYLDQSVTKSNRPGMIRVNLPDKDVKTIRPAFGKQYYYSTKGDNLHTTLETPLFDLTNATNAKFDFKSLYEIEAEYDFLEVHAVTEDGQKTLIERLGEKANSGNAEATNGKWIDKSYDLSQFKGKKVKLTFEYITDGGLALNGGLLDNASLTVDGKVTFSDDAEGTPQLKLDGFVVSSGTEKKKHNYYVEWRNHTGSDSALKFARGPEYNSGMVVWYADSAYADNWVGLHPGHGFLGVVDSHPEAIVGTLNGKPTIDSSTRFQIADAAFSFDKTPAWKVVSPTRGTYTYDGLAGVAKFDDSKTYINQQIPDAGRILPKLGLKFEVVGQADDNSAGAVRLYR.

Positions 1–12 (MKDAKADTKEKL) are enriched in basic and acidic residues. The segment at residues 1–25 (MKDAKADTKEKLNQPATGTPAATGP) is a signal peptide (or 32). The interval 1 to 43 (MKDAKADTKEKLNQPATGTPAATGPVKGGLNGKVPTSPAKQKA) is disordered. Residues 26–40 (VKGGLNGKVPTSPAK) constitute a propeptide that is removed on maturation. Histidine 266 is a Zn(2+) binding site. The active site involves glutamate 267. Histidine 270 is a Zn(2+) binding site.

The protein belongs to the peptidase M6 family. Zn(2+) is required as a cofactor. Ca(2+) serves as cofactor.

The protein resides in the secreted. Neutral metalloprotease that is secreted to degrade antibacterial proteins produced by the insect host for its defense (attacins and cecropins). Probably degrades some unknown crucial protein(s) too, since it is toxic when injected to insect larvae. This Bacillus thuringiensis subsp. alesti protein is Immune inhibitor A (ina).